We begin with the raw amino-acid sequence, 473 residues long: Xylosidase/arabinosidase (473 aa).

D18 acts as the Proton acceptor in catalysis. Residue E209 is the Proton donor of the active site.

It belongs to the glycosyl hydrolase 43 family. In terms of assembly, homotetramer.

It catalyses the reaction Hydrolysis of (1-&gt;4)-beta-D-xylans, to remove successive D-xylose residues from the non-reducing termini.. It carries out the reaction Hydrolysis of terminal non-reducing alpha-L-arabinofuranoside residues in alpha-L-arabinosides.. The chain is Xylosidase/arabinosidase (xylA) from Thermoclostridium stercorarium (Clostridium stercorarium).